The sequence spans 358 residues: Tetraacyldisaccharide 4'-kinase (358 aa).

Isoleucine 71–threonine 78 lines the ATP pocket.

Belongs to the LpxK family.

The catalysed reaction is a lipid A disaccharide + ATP = a lipid IVA + ADP + H(+). Its pathway is glycolipid biosynthesis; lipid IV(A) biosynthesis; lipid IV(A) from (3R)-3-hydroxytetradecanoyl-[acyl-carrier-protein] and UDP-N-acetyl-alpha-D-glucosamine: step 6/6. Transfers the gamma-phosphate of ATP to the 4'-position of a tetraacyldisaccharide 1-phosphate intermediate (termed DS-1-P) to form tetraacyldisaccharide 1,4'-bis-phosphate (lipid IVA). This Methylibium petroleiphilum (strain ATCC BAA-1232 / LMG 22953 / PM1) protein is Tetraacyldisaccharide 4'-kinase.